A 244-amino-acid chain; its full sequence is MKVTVIGCYGGFPAANEATSGYLFQSGDYSLLVDCGSAVLSKLFGYVPAEKLDAVVLSHYHHDHIADIGPLQFAKQVGSFLGKGEHTLPIYGHDADIEQFQKLTYKTHTKGIAYQPDQPLTAGPFTITFLKTIHPVTCYAMRITDGSHTVVYTADSSYQDSFIPFSKDADLLISECNFYADQDGTSAGHMNSLEAGRIAKEAGAGELLLTHLPHFGVHDNLRKEAKTVFNGEVNIAKSGFVWEG.

Residues His-59, His-61, Asp-63, His-64, His-134, Asp-155, and His-211 each contribute to the Zn(2+) site.

The protein belongs to the metallo-beta-lactamase superfamily. Zn(2+) serves as cofactor.

This Bacillus subtilis (strain 168) protein is Probable metallo-hydrolase YhfI (yhfI).